The chain runs to 1186 residues: ATP-dependent helicase/deoxyribonuclease subunit B (1186 aa).

Residues 1–308 (MSVKFLLGRA…AHLEKEWGKN (308 aa)) enclose the UvrD-like helicase ATP-binding domain. ATP is bound at residue 8–15 (GRAGSGKT). The region spanning 288–620 (SLPRFKDNPA…LVGTADRSRY (333 aa)) is the UvrD-like helicase C-terminal domain. Cys-822, Cys-1144, Cys-1147, and Cys-1153 together coordinate [4Fe-4S] cluster.

This sequence belongs to the helicase family. AddB/RexB type 1 subfamily. In terms of assembly, heterodimer of AddA and AddB. The cofactor is Mg(2+). Requires [4Fe-4S] cluster as cofactor.

Functionally, the heterodimer acts as both an ATP-dependent DNA helicase and an ATP-dependent, dual-direction single-stranded exonuclease. Recognizes the chi site generating a DNA molecule suitable for the initiation of homologous recombination. The AddB subunit has 5' -&gt; 3' nuclease activity but not helicase activity. In Natranaerobius thermophilus (strain ATCC BAA-1301 / DSM 18059 / JW/NM-WN-LF), this protein is ATP-dependent helicase/deoxyribonuclease subunit B.